The sequence spans 338 residues: Holliday junction branch migration complex subunit RuvB (338 aa).

Residues Met-1–Tyr-180 form a large ATPase domain (RuvB-L) region. Leu-19, Arg-20, Gly-61, Lys-64, Thr-65, Thr-66, Arg-170, Tyr-180, and Arg-217 together coordinate ATP. Thr-65 serves as a coordination point for Mg(2+). The tract at residues Thr-181–Glu-251 is small ATPAse domain (RuvB-S). The tract at residues Glu-254 to Arg-338 is head domain (RuvB-H). 2 residues coordinate DNA: Lys-309 and Arg-314.

The protein belongs to the RuvB family. As to quaternary structure, homohexamer. Forms an RuvA(8)-RuvB(12)-Holliday junction (HJ) complex. HJ DNA is sandwiched between 2 RuvA tetramers; dsDNA enters through RuvA and exits via RuvB. An RuvB hexamer assembles on each DNA strand where it exits the tetramer. Each RuvB hexamer is contacted by two RuvA subunits (via domain III) on 2 adjacent RuvB subunits; this complex drives branch migration. In the full resolvosome a probable DNA-RuvA(4)-RuvB(12)-RuvC(2) complex forms which resolves the HJ.

It is found in the cytoplasm. The enzyme catalyses ATP + H2O = ADP + phosphate + H(+). In terms of biological role, the RuvA-RuvB-RuvC complex processes Holliday junction (HJ) DNA during genetic recombination and DNA repair, while the RuvA-RuvB complex plays an important role in the rescue of blocked DNA replication forks via replication fork reversal (RFR). RuvA specifically binds to HJ cruciform DNA, conferring on it an open structure. The RuvB hexamer acts as an ATP-dependent pump, pulling dsDNA into and through the RuvAB complex. RuvB forms 2 homohexamers on either side of HJ DNA bound by 1 or 2 RuvA tetramers; 4 subunits per hexamer contact DNA at a time. Coordinated motions by a converter formed by DNA-disengaged RuvB subunits stimulates ATP hydrolysis and nucleotide exchange. Immobilization of the converter enables RuvB to convert the ATP-contained energy into a lever motion, pulling 2 nucleotides of DNA out of the RuvA tetramer per ATP hydrolyzed, thus driving DNA branch migration. The RuvB motors rotate together with the DNA substrate, which together with the progressing nucleotide cycle form the mechanistic basis for DNA recombination by continuous HJ branch migration. Branch migration allows RuvC to scan DNA until it finds its consensus sequence, where it cleaves and resolves cruciform DNA. In Caldicellulosiruptor bescii (strain ATCC BAA-1888 / DSM 6725 / KCTC 15123 / Z-1320) (Anaerocellum thermophilum), this protein is Holliday junction branch migration complex subunit RuvB.